Here is a 458-residue protein sequence, read N- to C-terminus: Flavohemoprotein (458 aa).

The region spanning 2–158 is the Globin domain; the sequence is PLSEDTIKAV…LAHLFVRREE (157 aa). His-107 contacts heme b. Active-site charge relay system residues include Tyr-117 and Glu-157. The reductase stretch occupies residues 169-457; the sequence is GGWRQTRSFR…FEMFGPFKPL (289 aa). In terms of domain architecture, FAD-binding FR-type spans 172-279; it reads RQTRSFRVEE…APPYGDFFLE (108 aa). Residues Tyr-211 and 228-231 each bind FAD; that span reads RQYS. 320-325 is an NADP(+) binding site; that stretch reads GIGQTP. 450–453 contacts FAD; the sequence is MFGP.

It belongs to the globin family. Two-domain flavohemoproteins subfamily. This sequence in the C-terminal section; belongs to the flavoprotein pyridine nucleotide cytochrome reductase family. Monomer. The cofactor is heme b. It depends on FAD as a cofactor.

The catalysed reaction is 2 nitric oxide + NADPH + 2 O2 = 2 nitrate + NADP(+) + H(+). It catalyses the reaction 2 nitric oxide + NADH + 2 O2 = 2 nitrate + NAD(+) + H(+). Functionally, flavohemoprotein involved in nitric oxide (NO) detoxification in an aerobic process, termed nitric oxide dioxygenase (NOD) reaction that utilizes O(2) and NAD(P)H to convert NO to nitrate, which protects the protozoan parasite from various noxious nitrogen compounds. Therefore, plays a central role in the inducible response to nitrosative stress. May also be involved in O(2) detoxification. This Giardia intestinalis (strain ATCC 50581 / GS clone H7) (Giardia lamblia) protein is Flavohemoprotein (hmpA).